Here is a 269-residue protein sequence, read N- to C-terminus: 3-methyl-2-oxobutanoate hydroxymethyltransferase (269 aa).

Residues D49 and D88 each contribute to the Mg(2+) site. Residues 49 to 50 (DS), D88, and K118 each bind 3-methyl-2-oxobutanoate. E120 is a Mg(2+) binding site. Residue E186 is the Proton acceptor of the active site.

The protein belongs to the PanB family. Homodecamer; pentamer of dimers. Requires Mg(2+) as cofactor.

The protein resides in the cytoplasm. The enzyme catalyses 3-methyl-2-oxobutanoate + (6R)-5,10-methylene-5,6,7,8-tetrahydrofolate + H2O = 2-dehydropantoate + (6S)-5,6,7,8-tetrahydrofolate. Its pathway is cofactor biosynthesis; (R)-pantothenate biosynthesis; (R)-pantoate from 3-methyl-2-oxobutanoate: step 1/2. In terms of biological role, catalyzes the reversible reaction in which hydroxymethyl group from 5,10-methylenetetrahydrofolate is transferred onto alpha-ketoisovalerate to form ketopantoate. The polypeptide is 3-methyl-2-oxobutanoate hydroxymethyltransferase (Pelobacter propionicus (strain DSM 2379 / NBRC 103807 / OttBd1)).